A 507-amino-acid polypeptide reads, in one-letter code: GMP synthase [glutamine-hydrolyzing] (507 aa).

In terms of domain architecture, Glutamine amidotransferase type-1 spans 9–202 (TILIIDFGSQ…VHRIVGVKPG (194 aa)). Cys86 acts as the Nucleophile in catalysis. Active-site residues include His176 and Glu178. The GMPS ATP-PPase domain maps to 203–395 (WTMGAYREQA…LGLPDSFIGR (193 aa)). 230–236 (SGGVDSS) is a binding site for ATP.

In terms of assembly, homodimer.

It catalyses the reaction XMP + L-glutamine + ATP + H2O = GMP + L-glutamate + AMP + diphosphate + 2 H(+). It participates in purine metabolism; GMP biosynthesis; GMP from XMP (L-Gln route): step 1/1. Functionally, catalyzes the synthesis of GMP from XMP. This chain is GMP synthase [glutamine-hydrolyzing], found in Brucella melitensis biotype 1 (strain ATCC 23456 / CCUG 17765 / NCTC 10094 / 16M).